Here is a 260-residue protein sequence, read N- to C-terminus: 3-alpha-(or 20-beta)-hydroxysteroid dehydrogenase (260 aa).

NAD(+) is bound by residues Arg17, Met19, Asp38, Asp61, Val62, Asn88, Tyr153, Lys157, Val186, Thr188, and Thr191. Tyr153 functions as the Proton acceptor in the catalytic mechanism.

It belongs to the short-chain dehydrogenases/reductases (SDR) family. As to quaternary structure, homotetramer.

It carries out the reaction androstan-3alpha,17beta-diol + NAD(+) = 17beta-hydroxyandrostanone + NADH + H(+). The protein operates within lipid metabolism; steroid degradation. Functionally, probably involved in steroid metabolism. The protein is 3-alpha-(or 20-beta)-hydroxysteroid dehydrogenase (fabG3) of Mycobacterium bovis (strain ATCC BAA-935 / AF2122/97).